The chain runs to 136 residues: MLAPKKQKFRKAHKGRVASIAKAGTTLAFGSFGLKSIDGWRVTARQIEAGRKAATRCMKRQGRLWIRIFPDVPVSKKPAEVRMGKGKGSPEFFAVRVSPGRIMFEIEGVEENVALRALELVSAKLPVRTRIVRRYE.

Belongs to the universal ribosomal protein uL16 family. Part of the 50S ribosomal subunit.

In terms of biological role, binds 23S rRNA and is also seen to make contacts with the A and possibly P site tRNAs. This Rickettsia africae (strain ESF-5) protein is Large ribosomal subunit protein uL16.